Here is a 784-residue protein sequence, read N- to C-terminus: Copal-8-ol diphosphate hydratase TPSSA9, chloroplastic (784 aa).

Position 240 (arginine 240) interacts with substrate. Aspartate 372 and aspartate 374 together coordinate Mg(2+). The DXDD motif motif lies at 372 to 375 (DIDD). Position 459 (arginine 459) interacts with substrate.

This sequence belongs to the terpene synthase family.

The protein resides in the plastid. Its subcellular location is the chloroplast. It catalyses the reaction (2E,6E,10E)-geranylgeranyl diphosphate + H2O = 8-hydroxycopalyl diphosphate. It functions in the pathway secondary metabolite biosynthesis; terpenoid biosynthesis. Functionally, involved in the biosynthesis of labdane-type diterpenoid including sclareol, a diterpene-diol that is used as fragrance and flavoring, and has anticancer effects (able to kill leukemic and colon cancer cells by apoptosis). Sclareol can also be used as synthesis precursor of ambergris substitution fragance products such as ambrox. Terpene synthase that produces 8-hydroxycopalyl diphosphate from geranylgeranyl diphosphate (GGPP). This is Copal-8-ol diphosphate hydratase TPSSA9, chloroplastic from Salvia sclarea (Clary sage).